Reading from the N-terminus, the 199-residue chain is MARVLVLYYSAYGHIETMAHAVAEGARSAGAEVAVKRVPELVPEDVAKASHFKLDQPAPVATVEELADYDAIIFGAGTRYGTVASQLRNFIDQTGGLWAKGKLVGKVGSAFTSSATQHGGQESTILGLIPTMMHHGMVVVGLPYAFQGQMGVEEVKGGSPYGASTITGGDGSRQPSAVELEAARFQGAHVARIAAKLAD.

The region spanning 4–190 (VLVLYYSAYG…EAARFQGAHV (187 aa)) is the Flavodoxin-like domain. FMN is bound by residues 10-15 (SAYGHI) and 78-80 (TRY). Tyr12 contributes to the NAD(+) binding site. A substrate-binding site is contributed by Trp98. Residues 113–119 (SSATQHG) and His134 contribute to the FMN site.

It belongs to the WrbA family. FMN serves as cofactor.

It carries out the reaction a quinone + NADH + H(+) = a quinol + NAD(+). It catalyses the reaction a quinone + NADPH + H(+) = a quinol + NADP(+). The protein is NAD(P)H dehydrogenase (quinone) 1 of Rhizobium meliloti (strain 1021) (Ensifer meliloti).